Consider the following 989-residue polypeptide: Voltage-gated delayed rectifier potassium channel KCNH1 (989 aa).

Topologically, residues Met1 to Trp220 are cytoplasmic. The region spanning Gln14 to Ser94 is the PAS domain. Residues Asn93 to Cys145 form the PAC domain. Positions Phe151–Arg162 are required for phosphatidylinositol bisphosphate binding. Residues Asp221–Phe241 traverse the membrane as a helical segment. The Extracellular segment spans residues Lys242 to Val248. A helical membrane pass occupies residues Ala249 to Phe269. Over His270–Asn290 the chain is Cytoplasmic. Residues Tyr291 to Ile309 form a helical membrane-spanning segment. Residues Asn310 to Gly345 lie on the Extracellular side of the membrane. Residues Ile346 to Leu368 form a helical; Voltage-sensor membrane-spanning segment. Residues Asp369–Ala377 lie on the Cytoplasmic side of the membrane. The chain crosses the membrane as a helical span at residues Val378–Ser399. The Extracellular portion of the chain corresponds to Ile400–Ser448. 2 N-linked (GlcNAc...) asparagine glycosylation sites follow: Asn415 and Asn433. Positions Val449–Ala470 form an intramembrane region, pore-forming. Residues Ser463–Asn468 carry the Selectivity filter motif. The Extracellular portion of the chain corresponds to Pro471 to Lys477. The chain crosses the membrane as a helical span at residues Ile478–Val498. Topologically, residues Thr499–Ser989 are cytoplasmic. Residues Lys673–Asn770 are calmodulin-binding. The interaction with cyclic nucleotide-binding pocket stretch occupies residues Tyr699–Leu701. Residues Lys855–Ser879 are compositionally biased toward basic and acidic residues. Disordered regions lie at residues Lys855–Lys886 and Arg962–Ser989. Residues Ala924–Ser964 form a CAD (involved in subunit assembly) region. Phosphoserine occurs at positions 974, 978, and 981. Over residues Glu980–Ser989 the composition is skewed to basic and acidic residues.

It belongs to the potassium channel family. H (Eag) (TC 1.A.1.20) subfamily. Kv10.1/KCNH1 sub-subfamily. In terms of assembly, homomultimer. The potassium channel is composed of a homo- or heterotetrameric complex of pore-forming alpha subunits that can associate with modulating beta subunits. Heteromultimer with KCNH5/EAG2. Interacts with ALG10B. Interacts with RABEP1. Interacts (via C-terminus) with CTTN. Interacts (via C-terminal cytoplasmic region) with Ca(2+)-bound calmodulin. Interacts with the spider kappa-theraphotoxin-Aa1a and mu/kappa-theraphotoxin-Ap1a. Channel activity is regulated via tyrosine phosphorylation/dephosphorylation by SRC and PTPN6. Highly expressed in brain and in myoblasts at the onset of fusion, but not in other tissues. Detected in HeLa (cervical carcinoma), SH-SY5Y (neuroblastoma) and MCF-7 (epithelial tumor) cells, but not in normal epithelial cells.

The protein resides in the cell membrane. The protein localises to the nucleus inner membrane. It is found in the cell projection. Its subcellular location is the dendrite. It localises to the axon. The protein resides in the presynaptic cell membrane. The protein localises to the perikaryon. It is found in the postsynaptic density membrane. Its subcellular location is the early endosome membrane. It carries out the reaction K(+)(in) = K(+)(out). Its activity is regulated as follows. Channel activity is inhibited by interaction with Ca(2+)-bound calmodulin. Interaction of a single pore-forming alpha subunit with a calmodulin chain is sufficient to promote channel closure. Channel activity is not regulated by cyclic nucleotides. Channel activity is inhibited by binding intracellular phosphatidylinositol-3,5-bisphosphate and phosphatidylinositol-4,5-bisphosphate (PIP2), but is not inhibited by phosphatidylinositol 4-phosphate. Inhibited by the spider kappa-theraphotoxin-Aa1a and mu/kappa-theraphotoxin-Ap1a. Functionally, pore-forming (alpha) subunit of a voltage-gated delayed rectifier potassium channel that mediates outward-rectifying potassium currents which, on depolarization, reaches a steady-state level and do not inactivate. The activation kinetics depend on the prepulse potential and external divalent cation concentration. With negative prepulses, the current activation is delayed and slowed down several fold, whereas more positive prepulses speed up activation. The time course of activation is biphasic with a fast and a slowly activating current component. Activates at more positive membrane potentials and exhibit a steeper activation curve. Channel properties are modulated by subunit assembly. Mediates IK(NI) current in myoblasts. Involved in the regulation of cell proliferation and differentiation, in particular adipogenic and osteogenic differentiation in bone marrow-derived mesenchymal stem cells (MSCs). The polypeptide is Voltage-gated delayed rectifier potassium channel KCNH1 (Homo sapiens (Human)).